Consider the following 79-residue polypeptide: Sec-independent protein translocase protein TatA (79 aa).

Residues 1 to 21 (MGGISIWQLLIILVIVVLLFG) form a helical membrane-spanning segment. The segment at 45–79 (EEEKDADFEQKKQVEEKSAAEPVSTETQSDVKEKS) is disordered. Over residues 51-63 (DFEQKKQVEEKSA) the composition is skewed to basic and acidic residues.

It belongs to the TatA/E family. In terms of assembly, the Tat system comprises two distinct complexes: a TatABC complex, containing multiple copies of TatA, TatB and TatC subunits, and a separate TatA complex, containing only TatA subunits. Substrates initially bind to the TatABC complex, which probably triggers association of the separate TatA complex to form the active translocon.

Its subcellular location is the cell inner membrane. Part of the twin-arginine translocation (Tat) system that transports large folded proteins containing a characteristic twin-arginine motif in their signal peptide across membranes. TatA could form the protein-conducting channel of the Tat system. This chain is Sec-independent protein translocase protein TatA, found in Alteromonas mediterranea (strain DSM 17117 / CIP 110805 / LMG 28347 / Deep ecotype).